The primary structure comprises 131 residues: Phosphoribosyl-AMP cyclohydrolase (131 aa).

Mg(2+) is bound at residue Asp89. Cys90 is a Zn(2+) binding site. Asp91 and Asp93 together coordinate Mg(2+). The Zn(2+) site is built by Cys106 and Cys113.

It belongs to the PRA-CH family. Homodimer. The cofactor is Mg(2+). Requires Zn(2+) as cofactor.

It is found in the cytoplasm. It catalyses the reaction 1-(5-phospho-beta-D-ribosyl)-5'-AMP + H2O = 1-(5-phospho-beta-D-ribosyl)-5-[(5-phospho-beta-D-ribosylamino)methylideneamino]imidazole-4-carboxamide. It participates in amino-acid biosynthesis; L-histidine biosynthesis; L-histidine from 5-phospho-alpha-D-ribose 1-diphosphate: step 3/9. Functionally, catalyzes the hydrolysis of the adenine ring of phosphoribosyl-AMP. This is Phosphoribosyl-AMP cyclohydrolase from Pyrobaculum aerophilum (strain ATCC 51768 / DSM 7523 / JCM 9630 / CIP 104966 / NBRC 100827 / IM2).